A 359-amino-acid chain; its full sequence is Phosphoserine aminotransferase (359 aa).

Arg42 serves as a coordination point for L-glutamate. Pyridoxal 5'-phosphate contacts are provided by residues 76 to 77 (AS), Trp102, Thr152, Asp171, and Gln194. At Lys195 the chain carries N6-(pyridoxal phosphate)lysine. 236 to 237 (NT) is a binding site for pyridoxal 5'-phosphate.

The protein belongs to the class-V pyridoxal-phosphate-dependent aminotransferase family. SerC subfamily. In terms of assembly, homodimer. Pyridoxal 5'-phosphate serves as cofactor.

The protein resides in the cytoplasm. It carries out the reaction O-phospho-L-serine + 2-oxoglutarate = 3-phosphooxypyruvate + L-glutamate. The catalysed reaction is 4-(phosphooxy)-L-threonine + 2-oxoglutarate = (R)-3-hydroxy-2-oxo-4-phosphooxybutanoate + L-glutamate. The protein operates within amino-acid biosynthesis; L-serine biosynthesis; L-serine from 3-phospho-D-glycerate: step 2/3. Its pathway is cofactor biosynthesis; pyridoxine 5'-phosphate biosynthesis; pyridoxine 5'-phosphate from D-erythrose 4-phosphate: step 3/5. Functionally, catalyzes the reversible conversion of 3-phosphohydroxypyruvate to phosphoserine and of 3-hydroxy-2-oxo-4-phosphonooxybutanoate to phosphohydroxythreonine. This is Phosphoserine aminotransferase from Ruthia magnifica subsp. Calyptogena magnifica.